Reading from the N-terminus, the 414-residue chain is Alanine--glyoxylate aminotransferase (414 aa).

The N-terminal 23 residues, 1–23 (MFRALARASATLGPQVAGWARTM), are a transit peptide targeting the mitochondrion. Residue Lys231 is modified to N6-(pyridoxal phosphate)lysine. An N6-acetyllysine; alternate modification is found at Lys247. An N6-succinyllysine; alternate modification is found at Lys247. Lys256 and Lys334 each carry N6-acetyllysine. Arg382 is a binding site for substrate. The Microbody targeting signal motif lies at 412-414 (NKL).

The protein belongs to the class-V pyridoxal-phosphate-dependent aminotransferase family. In terms of assembly, homodimer. The cofactor is pyridoxal 5'-phosphate.

Its subcellular location is the peroxisome. It is found in the mitochondrion matrix. The catalysed reaction is L-serine + pyruvate = 3-hydroxypyruvate + L-alanine. It catalyses the reaction glyoxylate + L-alanine = glycine + pyruvate. In terms of biological role, catalyzes the transamination of glyoxylate to glycine and contributes to the glyoxylate detoxification. Functionally, catalyzes the transamination between L-serine and pyruvate and contributes to gluconeogenesis from the L-serine metabolism. The polypeptide is Alanine--glyoxylate aminotransferase (Felis catus (Cat)).